A 248-amino-acid chain; its full sequence is NADP-dependent 3-hydroxy acid dehydrogenase YdfG (248 aa).

NADP(+) is bound by residues 7-12 (GATAGF), 32-33 (RR), 54-55 (DV), and asparagine 81. Serine 134 is a substrate binding site. NADP(+)-binding positions include tyrosine 147, lysine 151, and 177–185 (PGLVGGTEF). Tyrosine 147 functions as the Proton acceptor in the catalytic mechanism.

Belongs to the short-chain dehydrogenases/reductases (SDR) family. Homotetramer.

It catalyses the reaction 3-hydroxypropanoate + NADP(+) = 3-oxopropanoate + NADPH + H(+). It carries out the reaction L-allo-threonine + NADP(+) = aminoacetone + CO2 + NADPH. In terms of biological role, NADP-dependent dehydrogenase with broad substrate specificity acting on 3-hydroxy acids. Catalyzes the NADP-dependent oxidation of L-allo-threonine to L-2-amino-3-keto-butyrate, which is spontaneously decarboxylated into aminoacetone. Also acts on D-threonine, L-serine, D-serine, D-3-hydroxyisobutyrate, L-3-hydroxyisobutyrate, D-glycerate and L-glycerate. Able to catalyze the reduction of the malonic semialdehyde to 3-hydroxypropionic acid. YdfG is apparently supplementing RutE, the presumed malonic semialdehyde reductase involved in pyrimidine degradation since both are able to detoxify malonic semialdehyde. The chain is NADP-dependent 3-hydroxy acid dehydrogenase YdfG from Escherichia coli (strain K12).